A 1284-amino-acid polypeptide reads, in one-letter code: Kinesin-like protein KIN-4C (1284 aa).

One can recognise a Kinesin motor domain in the interval 12–364; the sequence is SVKVVVNIRP…LKYANRARNI (353 aa). 91–98 lines the ATP pocket; sequence GQTGSGKT. Coiled-coil stretches lie at residues 407–445, 561–711, and 911–950; these read SAAL…EQLA, RDHS…QFRS, and MCKE…NMLL. 2 disordered regions span residues 1040-1070 and 1158-1284; these read RRQT…SQEK and MSEK…NHLR. Over residues 1043–1070 the composition is skewed to polar residues; it reads TVSSHLNPNPGSGTTQKSAKSEMASQEK. Composition is skewed to basic and acidic residues over residues 1158–1172 and 1275–1284; these read MSEK…RKPL and NANEKENHLR.

This sequence belongs to the TRAFAC class myosin-kinesin ATPase superfamily. Kinesin family. KIN-4 subfamily. In terms of assembly, homodimer.

Its function is as follows. Microtubule-dependent motor protein involved in the control of the oriented deposition of cellulose microfibrils. This Oryza sativa subsp. japonica (Rice) protein is Kinesin-like protein KIN-4C.